Reading from the N-terminus, the 156-residue chain is Ribosomal RNA large subunit methyltransferase H (156 aa).

S-adenosyl-L-methionine-binding positions include Leu-73, Gly-104, and 123–128 (LSSLTL).

Belongs to the RNA methyltransferase RlmH family. As to quaternary structure, homodimer.

The protein localises to the cytoplasm. The catalysed reaction is pseudouridine(1915) in 23S rRNA + S-adenosyl-L-methionine = N(3)-methylpseudouridine(1915) in 23S rRNA + S-adenosyl-L-homocysteine + H(+). Functionally, specifically methylates the pseudouridine at position 1915 (m3Psi1915) in 23S rRNA. The protein is Ribosomal RNA large subunit methyltransferase H of Neisseria meningitidis serogroup A / serotype 4A (strain DSM 15465 / Z2491).